The sequence spans 191 residues: MPDAFPPCSILILAGGRGQRMGGRDKGLIDWQGEPLVAHVQRVVRPLSDDLVISCNRNQEAYRAYADQVVGDAEADFPGPLAGVIAGLKVARHEWVVLLACDAPRVDQVLIEDLLRLAKANDSAAMVRQGEYWQPMFSVLPKRVLPVLEQAWAAGERSLQKALLREAVQGLACADDDCRLSNFNSPELLQG.

Residues 13–15, Lys26, Asp72, and Asp102 contribute to the GTP site; that span reads LAG. Asp102 lines the Mg(2+) pocket.

The protein belongs to the MobA family. Monomer. The cofactor is Mg(2+).

It is found in the cytoplasm. It catalyses the reaction Mo-molybdopterin + GTP + H(+) = Mo-molybdopterin guanine dinucleotide + diphosphate. In terms of biological role, transfers a GMP moiety from GTP to Mo-molybdopterin (Mo-MPT) cofactor (Moco or molybdenum cofactor) to form Mo-molybdopterin guanine dinucleotide (Mo-MGD) cofactor. This is Molybdenum cofactor guanylyltransferase from Pseudomonas putida (strain GB-1).